Reading from the N-terminus, the 138-residue chain is Putative membrane protein ORF6 (138 aa).

2 helical membrane-spanning segments follow: residues 4–20 (LTII…HAVL) and 37–53 (VVVL…LMTI).

It localises to the membrane. This chain is Putative membrane protein ORF6 (ORF6), found in Ictalurid herpesvirus 1 (strain Auburn) (IcHV-1).